We begin with the raw amino-acid sequence, 586 residues long: Eukaryotic translation initiation factor 3 subunit D (586 aa).

Disordered stretches follow at residues 16 to 37 (EDSW…YAPF) and 104 to 176 (KRTF…REPS). Residues 108–131 (GRGGGTVFRGRAQRGGAGQRGGRA) show a composition bias toward gly residues. Over residues 162 to 174 (GWKDYDKPQRTRE) the composition is skewed to basic and acidic residues. The RNA gate stretch occupies residues 301–315 (SIDLVTVNENAADAP). The tract at residues 563 to 586 (ANTFEEDDEAADEQEEKATEESEE) is disordered. Acidic residues predominate over residues 566–577 (FEEDDEAADEQE).

It belongs to the eIF-3 subunit D family. In terms of assembly, component of the eukaryotic translation initiation factor 3 (eIF-3) complex.

It is found in the cytoplasm. In terms of biological role, mRNA cap-binding component of the eukaryotic translation initiation factor 3 (eIF-3) complex, which is involved in protein synthesis of a specialized repertoire of mRNAs and, together with other initiation factors, stimulates binding of mRNA and methionyl-tRNAi to the 40S ribosome. The eIF-3 complex specifically targets and initiates translation of a subset of mRNAs involved in cell proliferation. In the eIF-3 complex, eif3d specifically recognizes and binds the 7-methylguanosine cap of a subset of mRNAs. The sequence is that of Eukaryotic translation initiation factor 3 subunit D from Aspergillus clavatus (strain ATCC 1007 / CBS 513.65 / DSM 816 / NCTC 3887 / NRRL 1 / QM 1276 / 107).